Consider the following 504-residue polypeptide: Calcium/calmodulin-dependent protein kinase type II (504 aa).

The Protein kinase domain occupies 65–351; the sequence is YQLIENLGDG…IHQFFQHPWI (287 aa). Residues 71-79 and Lys-94 each bind ATP; that span reads LGDGAFSQV. The active-site Proton acceptor is Asp-188. Residue Thr-252 is modified to Phosphothreonine.

The protein belongs to the protein kinase superfamily. CAMK Ser/Thr protein kinase family. CaMK subfamily. Interacts with sty1. Mg(2+) is required as a cofactor. In terms of processing, autophosphorylated.

Its subcellular location is the cytoplasm. The protein resides in the barrier septum. It is found in the forespore membrane. It localises to the ascus epiplasm. The catalysed reaction is L-seryl-[protein] + ATP = O-phospho-L-seryl-[protein] + ADP + H(+). The enzyme catalyses L-threonyl-[protein] + ATP = O-phospho-L-threonyl-[protein] + ADP + H(+). Has a role in the regulation of G2/M transition during the mitotic cell cycle. This chain is Calcium/calmodulin-dependent protein kinase type II, found in Schizosaccharomyces pombe (strain 972 / ATCC 24843) (Fission yeast).